Reading from the N-terminus, the 614-residue chain is Chaperone protein HtpG (614 aa).

The interval 1–324 (MSQIETKEFQ…SEELPLNISR (324 aa)) is a; substrate-binding. A b region spans residues 325-537 (ETMQDSALIA…SHYGTHSMQR (213 aa)). Positions 538 to 614 (MMQLMNRDLQ…LNEILEKALR (77 aa)) are c.

The protein belongs to the heat shock protein 90 family. Homodimer.

It localises to the cytoplasm. Molecular chaperone. Has ATPase activity. This Desulfitobacterium hafniense (strain Y51) protein is Chaperone protein HtpG.